The primary structure comprises 105 residues: N(4)-acetylcytidine amidohydrolase (105 aa).

The ASCH domain occupies 7-93 (TFFERFEHDI…VIAEIYPGLE (87 aa)). K21 (proton acceptor) is an active-site residue. The active-site Nucleophile is T24. The Proton donor role is filled by E74.

Belongs to the N(4)-acetylcytidine amidohydrolase family.

The enzyme catalyses N(4)-acetylcytidine + H2O = cytidine + acetate + H(+). It catalyses the reaction N(4)-acetyl-2'-deoxycytidine + H2O = 2'-deoxycytidine + acetate + H(+). The catalysed reaction is N(4)-acetylcytosine + H2O = cytosine + acetate + H(+). Its function is as follows. Catalyzes the hydrolysis of N(4)-acetylcytidine (ac4C). This is N(4)-acetylcytidine amidohydrolase from Shewanella baltica (strain OS185).